The following is a 310-amino-acid chain: Porphobilinogen deaminase (310 aa).

C242 is subject to S-(dipyrrolylmethanemethyl)cysteine.

It belongs to the HMBS family. Monomer. Dipyrromethane serves as cofactor.

The catalysed reaction is 4 porphobilinogen + H2O = hydroxymethylbilane + 4 NH4(+). Its pathway is porphyrin-containing compound metabolism; protoporphyrin-IX biosynthesis; coproporphyrinogen-III from 5-aminolevulinate: step 2/4. Functionally, tetrapolymerization of the monopyrrole PBG into the hydroxymethylbilane pre-uroporphyrinogen in several discrete steps. This chain is Porphobilinogen deaminase, found in Psychromonas ingrahamii (strain DSM 17664 / CCUG 51855 / 37).